We begin with the raw amino-acid sequence, 243 residues long: Sec-independent protein translocase protein TATB, chloroplastic (243 aa).

The transit peptide at 1 to 67 (MTPTANLLLP…SRTRRRNVIC (67 aa)) directs the protein to the chloroplast. At 68–69 (AS) the chain is on the lumenal side. A helical membrane pass occupies residues 70 to 90 (LFGVGAPEALVIGVVALLVFG). Over 91–243 (PKGLAEVARN…NKSQKAEGER (153 aa)) the chain is Stromal. 2 disordered regions span residues 129–165 (EIGI…PAPY) and 178–243 (IAAS…EGER). Polar residues-rich tracts occupy residues 135–152 (VSQS…NQQP) and 187–204 (NPQQ…PTTP).

Belongs to the TatB family. In terms of assembly, in thylakoid membranes, TATC and TATB form a large receptor complex, containing about eight TATC-TATB pairs, which binds the precursor protein. Twin arginine signal peptide promotes pH-triggered docking of TATA oligomers to TATC-TATB receptor complex, inducing a conformational switch of TATA that results in activation of the translocase. TATA dissociates from TATC-TATB upon completion of translocation.

It is found in the plastid. The protein localises to the chloroplast thylakoid membrane. In terms of biological role, part of the twin-arginine translocation (Tat) system that transports large folded proteins containing a characteristic twin-arginine motif in their signal peptide across the thylakoid membrane. Involved in delta pH-dependent protein transport required for chloroplast development, especially thylakoid membrane formation. TATC and TATB mediate precursor recognition, whereas TATA facilitates translocation. This is Sec-independent protein translocase protein TATB, chloroplastic from Zea mays (Maize).